The primary structure comprises 304 residues: Mitochondrial RNA-splicing protein MRS4 (304 aa).

Solcar repeat units follow at residues 21–108 (APLH…CKAR), 118–200 (HQPM…ASKF), and 207–300 (YNPL…AKHF). The next 6 helical transmembrane spans lie at 23 to 41 (LHSQLLAGAFAGIMEHSLM), 83 to 102 (GVQSVILGAGPAHAVYFGTY), 120 to 139 (PMKTALSGTIATIAADALMN), 175 to 194 (SYPTTLAMNIPFAAFNFMIY), 209 to 228 (PLIHCLCGGISGATCAALTT), and 275 to 288 (GLKPRIVANIPATA).

This sequence belongs to the mitochondrial carrier (TC 2.A.29) family.

The protein resides in the mitochondrion inner membrane. Functionally, MRS4 suppresses a mitochondrial splice defect in the first intron of the COB gene. It may act as a carrier, exerting its suppressor activity via modulation of solute concentrations in the mitochondrion (possibly of cations). Not essential. In Saccharomyces cerevisiae (strain ATCC 204508 / S288c) (Baker's yeast), this protein is Mitochondrial RNA-splicing protein MRS4 (MRS4).